Reading from the N-terminus, the 190-residue chain is MATIGYIRVSTIDQNIDLQRNALTSANCDRIFEDRISGKIANRPGLKRALKYVNKGDTLVVWKLDRLGRSVKNLVALISELHERGAHFHSLTDSIDTSSAMGRFFFHVMSAPAEMERELIVERTLAGLAAARAQGRLGGHPRAINRHEQEQISRLLEKGHPRQQLAIIFGIGVSTLYRYFPASRIKKRMN.

In terms of domain architecture, Resolvase/invertase-type recombinase catalytic spans 2 to 135 (ATIGYIRVST…AGLAAARAQG (134 aa)). The active-site O-(5'-phospho-DNA)-serine intermediate is the S10. The segment at residues 162-181 (RQQLAIIFGIGVSTLYRYFP) is a DNA-binding region (H-T-H motif).

It belongs to the site-specific recombinase resolvase family.

Functionally, a DNA fragment of approximately 900 base pairs, adjacent to the fljB (H2) gene, which specifies the synthesis of phase-2 flagellin, can exist in either orientation with respect to fljB. The orientation of the inversion region controls expression of fljB. The hin gene occupies about two-thirds of the inversion region; it is required for the inversion of the fljB controlling region. The chain is DNA-invertase (hin) from Salmonella abortus-equi.